Here is a 258-residue protein sequence, read N- to C-terminus: Ribosomal RNA small subunit methyltransferase J (258 aa).

S-adenosyl-L-methionine is bound by residues 123–124 and Asp177; that span reads ER. The segment at 232 to 258 is disordered; the sequence is IDGPKPSHSLEGKSSRYDIYPKKALKA. Residues 239-252 show a composition bias toward basic and acidic residues; that stretch reads HSLEGKSSRYDIYP.

The protein belongs to the methyltransferase superfamily. RsmJ family.

It localises to the cytoplasm. It catalyses the reaction guanosine(1516) in 16S rRNA + S-adenosyl-L-methionine = N(2)-methylguanosine(1516) in 16S rRNA + S-adenosyl-L-homocysteine + H(+). Functionally, specifically methylates the guanosine in position 1516 of 16S rRNA. The chain is Ribosomal RNA small subunit methyltransferase J from Pseudomonas putida (strain GB-1).